The sequence spans 266 residues: MRLIPLAQAAQVGKWAAAHIAKRINDFKPTAERPFVLGLPTGGTPLATYKALIELYQAGEVSFEHVVTFNMDEYIGIPADHPESYRSFMYTNFFNHVNIQEANINLLNGNAEDHEAECQRYEDKIKSYGKINLFMGGVGNDGHIAFNEPASSLSSRTRIKTLTEDTRIANSRFFDGDINQVPKYALTIGVGTLLDAEEVMILVTGHNKALALEAAVEGSVNHLWTVSALQLHPKAVIVCDEPSQQELKVKTVKYFSELEAENIKGF.

Asp-72 functions as the Proton acceptor; for enolization step in the catalytic mechanism. The active-site For ring-opening step is Asp-141. The Proton acceptor; for ring-opening step role is filled by His-143. The active-site For ring-opening step is the Glu-148.

It belongs to the glucosamine/galactosamine-6-phosphate isomerase family. NagB subfamily. In terms of assembly, homohexamer.

It carries out the reaction alpha-D-glucosamine 6-phosphate + H2O = beta-D-fructose 6-phosphate + NH4(+). The protein operates within amino-sugar metabolism; N-acetylneuraminate degradation; D-fructose 6-phosphate from N-acetylneuraminate: step 5/5. With respect to regulation, allosterically activated by N-acetylglucosamine 6-phosphate (GlcNAc6P). Catalyzes the reversible isomerization-deamination of glucosamine 6-phosphate (GlcN6P) to form fructose 6-phosphate (Fru6P) and ammonium ion. This chain is Glucosamine-6-phosphate deaminase, found in Vibrio campbellii (strain ATCC BAA-1116).